The following is a 41-amino-acid chain: Large ribosomal subunit protein bL36 (41 aa).

This sequence belongs to the bacterial ribosomal protein bL36 family.

The protein is Large ribosomal subunit protein bL36 of Xylella fastidiosa (strain 9a5c).